A 211-amino-acid polypeptide reads, in one-letter code: Thiamine-phosphate synthase (211 aa).

4-amino-2-methyl-5-(diphosphooxymethyl)pyrimidine-binding positions include Gln37–Lys41 and Asn69. Residues Asp70 and Asp89 each contribute to the Mg(2+) site. Ser108 is a 4-amino-2-methyl-5-(diphosphooxymethyl)pyrimidine binding site. Thr134–Thr136 lines the 2-[(2R,5Z)-2-carboxy-4-methylthiazol-5(2H)-ylidene]ethyl phosphate pocket. Lys137 serves as a coordination point for 4-amino-2-methyl-5-(diphosphooxymethyl)pyrimidine. 2-[(2R,5Z)-2-carboxy-4-methylthiazol-5(2H)-ylidene]ethyl phosphate is bound by residues Gly166 and Val186–Ser187.

It belongs to the thiamine-phosphate synthase family. Mg(2+) serves as cofactor.

The enzyme catalyses 2-[(2R,5Z)-2-carboxy-4-methylthiazol-5(2H)-ylidene]ethyl phosphate + 4-amino-2-methyl-5-(diphosphooxymethyl)pyrimidine + 2 H(+) = thiamine phosphate + CO2 + diphosphate. It carries out the reaction 2-(2-carboxy-4-methylthiazol-5-yl)ethyl phosphate + 4-amino-2-methyl-5-(diphosphooxymethyl)pyrimidine + 2 H(+) = thiamine phosphate + CO2 + diphosphate. The catalysed reaction is 4-methyl-5-(2-phosphooxyethyl)-thiazole + 4-amino-2-methyl-5-(diphosphooxymethyl)pyrimidine + H(+) = thiamine phosphate + diphosphate. The protein operates within cofactor biosynthesis; thiamine diphosphate biosynthesis; thiamine phosphate from 4-amino-2-methyl-5-diphosphomethylpyrimidine and 4-methyl-5-(2-phosphoethyl)-thiazole: step 1/1. Its function is as follows. Condenses 4-methyl-5-(beta-hydroxyethyl)thiazole monophosphate (THZ-P) and 2-methyl-4-amino-5-hydroxymethyl pyrimidine pyrophosphate (HMP-PP) to form thiamine monophosphate (TMP). The protein is Thiamine-phosphate synthase of Salmonella schwarzengrund (strain CVM19633).